Reading from the N-terminus, the 283-residue chain is tRNA dimethylallyltransferase (283 aa).

An interaction with substrate tRNA region spans residues 5–8 (DSML).

This sequence belongs to the IPP transferase family. Monomer. Requires Mg(2+) as cofactor.

The catalysed reaction is adenosine(37) in tRNA + dimethylallyl diphosphate = N(6)-dimethylallyladenosine(37) in tRNA + diphosphate. Catalyzes the transfer of a dimethylallyl group onto the adenine at position 37 in tRNAs that read codons beginning with uridine, leading to the formation of N6-(dimethylallyl)adenosine (i(6)A). This Desulforamulus reducens (strain ATCC BAA-1160 / DSM 100696 / MI-1) (Desulfotomaculum reducens) protein is tRNA dimethylallyltransferase.